The primary structure comprises 383 residues: Succinyl-diaminopimelate desuccinylase (383 aa).

His70 is a Zn(2+) binding site. The active site involves Asp72. Asp103 lines the Zn(2+) pocket. Glu137 serves as the catalytic Proton acceptor. The Zn(2+) site is built by Glu138, Glu166, and His352.

The protein belongs to the peptidase M20A family. DapE subfamily. As to quaternary structure, homodimer. Zn(2+) serves as cofactor. It depends on Co(2+) as a cofactor.

The enzyme catalyses N-succinyl-(2S,6S)-2,6-diaminopimelate + H2O = (2S,6S)-2,6-diaminopimelate + succinate. The protein operates within amino-acid biosynthesis; L-lysine biosynthesis via DAP pathway; LL-2,6-diaminopimelate from (S)-tetrahydrodipicolinate (succinylase route): step 3/3. Its function is as follows. Catalyzes the hydrolysis of N-succinyl-L,L-diaminopimelic acid (SDAP), forming succinate and LL-2,6-diaminopimelate (DAP), an intermediate involved in the bacterial biosynthesis of lysine and meso-diaminopimelic acid, an essential component of bacterial cell walls. This Hahella chejuensis (strain KCTC 2396) protein is Succinyl-diaminopimelate desuccinylase.